Reading from the N-terminus, the 143-residue chain is Hemoglobin subunit alpha-1 (143 aa).

An N-acetylserine modification is found at serine 2. The 142-residue stretch at 2 to 143 folds into the Globin domain; that stretch reads SLSSKDKATV…RALALAEKYR (142 aa). Histidine 60 provides a ligand contact to O2. A heme b-binding site is contributed by histidine 89.

The protein belongs to the globin family. As to quaternary structure, hb 1 is a heterotetramer of two alpha-1 and two beta-1 chains. Hb 3 is a heterotetramer of two alpha-1 and two beta-2 chains. In terms of tissue distribution, red blood cells.

Involved in oxygen transport from gills to the various peripheral tissues. The polypeptide is Hemoglobin subunit alpha-1 (hba1) (Gadus morhua (Atlantic cod)).